Here is a 309-residue protein sequence, read N- to C-terminus: Porphobilinogen deaminase (309 aa).

Cys241 is modified (S-(dipyrrolylmethanemethyl)cysteine).

Belongs to the HMBS family. As to quaternary structure, monomer. It depends on dipyrromethane as a cofactor.

The enzyme catalyses 4 porphobilinogen + H2O = hydroxymethylbilane + 4 NH4(+). Its pathway is porphyrin-containing compound metabolism; protoporphyrin-IX biosynthesis; coproporphyrinogen-III from 5-aminolevulinate: step 2/4. Functionally, tetrapolymerization of the monopyrrole PBG into the hydroxymethylbilane pre-uroporphyrinogen in several discrete steps. The polypeptide is Porphobilinogen deaminase (Bacillus thuringiensis (strain Al Hakam)).